The following is a 284-amino-acid chain: MLSKQIPLGIYEKALPAGECWLERLRLAKTLGFDFVEMSVDETDERLSRLDWSREQRLALVNAIVETGVRVPSMCLSAHRRFPLGSEDDAVRAQGLEIMRKAIQFAQDVGIRVIQLAGYDVYYQEANNETRRRFRDGLKESVEMASRAQVTLAMEIMDYPLMNSISKALGYAHYLNNPWFQLYPDIGNLSAWDNDVQMELQAGIGHIVAVHVKDTKPGVFKNVPFGEGVVDFERCFETLKQSGYCGPYLIEMWSETAEDPAAEVVKARDWVKARMAKAGTVEAA.

This sequence belongs to the L-ribulose-5-phosphate 3-epimerase family.

The enzyme catalyses L-ribulose 5-phosphate = L-xylulose 5-phosphate. It functions in the pathway cofactor degradation; L-ascorbate degradation; D-xylulose 5-phosphate from L-ascorbate: step 3/4. Functionally, catalyzes the isomerization of L-xylulose-5-phosphate to L-ribulose-5-phosphate. Is involved in the anaerobic L-ascorbate utilization. In Shigella sonnei (strain Ss046), this protein is L-ribulose-5-phosphate 3-epimerase UlaE.